A 381-amino-acid polypeptide reads, in one-letter code: Queuine tRNA-ribosyltransferase (381 aa).

Asp96 functions as the Proton acceptor in the catalytic mechanism. Residues 96–100, Asp150, Gln193, and Gly220 each bind substrate; that span reads DSGGF. The RNA binding stretch occupies residues 251-257; the sequence is GVGAPDS. Catalysis depends on Asp270, which acts as the Nucleophile. Positions 275 to 279 are RNA binding; important for wobble base 34 recognition; it reads TRIAR. Positions 308, 310, 313, and 339 each coordinate Zn(2+).

This sequence belongs to the queuine tRNA-ribosyltransferase family. In terms of assembly, homodimer. Within each dimer, one monomer is responsible for RNA recognition and catalysis, while the other monomer binds to the replacement base PreQ1. The cofactor is Zn(2+).

It carries out the reaction 7-aminomethyl-7-carbaguanine + guanosine(34) in tRNA = 7-aminomethyl-7-carbaguanosine(34) in tRNA + guanine. The protein operates within tRNA modification; tRNA-queuosine biosynthesis. Functionally, catalyzes the base-exchange of a guanine (G) residue with the queuine precursor 7-aminomethyl-7-deazaguanine (PreQ1) at position 34 (anticodon wobble position) in tRNAs with GU(N) anticodons (tRNA-Asp, -Asn, -His and -Tyr). Catalysis occurs through a double-displacement mechanism. The nucleophile active site attacks the C1' of nucleotide 34 to detach the guanine base from the RNA, forming a covalent enzyme-RNA intermediate. The proton acceptor active site deprotonates the incoming PreQ1, allowing a nucleophilic attack on the C1' of the ribose to form the product. After dissociation, two additional enzymatic reactions on the tRNA convert PreQ1 to queuine (Q), resulting in the hypermodified nucleoside queuosine (7-(((4,5-cis-dihydroxy-2-cyclopenten-1-yl)amino)methyl)-7-deazaguanosine). This Enterococcus faecalis (strain ATCC 700802 / V583) protein is Queuine tRNA-ribosyltransferase.